Consider the following 353-residue polypeptide: Glycerol-3-phosphate dehydrogenase [NAD(+)], cytoplasmic (353 aa).

Ala-2 carries the blocked amino end (Ala) modification. Residues 11–16 (GSGNWG), Phe-98, Lys-121, and Ala-155 each bind NAD(+). Residue Lys-121 coordinates substrate. The active-site Proton acceptor is Lys-206. Residues Arg-270 and Gln-299 each coordinate NAD(+). 270 to 271 (RN) provides a ligand contact to substrate.

The protein belongs to the NAD-dependent glycerol-3-phosphate dehydrogenase family. In terms of assembly, homodimer.

It is found in the cytoplasm. It carries out the reaction sn-glycerol 3-phosphate + NAD(+) = dihydroxyacetone phosphate + NADH + H(+). It functions in the pathway phospholipid metabolism; alpha-glycerophosphate cycle. The chain is Glycerol-3-phosphate dehydrogenase [NAD(+)], cytoplasmic from Drosophila virilis (Fruit fly).